The sequence spans 629 residues: uncharacterized protein (629 aa).

The segment covering 1-11 (MSDDQQNGKQN) has biased composition (polar residues). Disordered regions lie at residues 1–24 (MSDD…EQDD), 62–87 (SNNN…SNYN), 197–464 (SEES…SSLI), and 493–560 (PTPT…STPD). Over residues 247 to 264 (PSSSSSSSSLINSPTTSK) the composition is skewed to low complexity. Polar residues predominate over residues 274 to 288 (PTINPKSLFGLSSTI). A compositionally biased stretch (basic and acidic residues) spans 294–430 (VKTEKEKEKE…DETLNKETPH (137 aa)). Composition is skewed to low complexity over residues 434-464 (PHIT…SSLI) and 493-554 (PTPT…NNNN).

This is an uncharacterized protein from Dictyostelium discoideum (Social amoeba).